A 205-amino-acid polypeptide reads, in one-letter code: Ypt/Rab-type GTPase Rab7 (205 aa).

Residues 17–23 (SGVGKTS), 33–40 (FSASYKAT), Gly-66, 125–128 (NKID), and 157–159 (SAK) contribute to the GTP site. Positions 37–45 (YKATIGADF) match the Effector region motif. Residues Cys-203 and Cys-205 are each lipidated (S-geranylgeranyl cysteine). Position 205 is a cysteine methyl ester (Cys-205).

This sequence belongs to the small GTPase superfamily. Rab family.

Its subcellular location is the cell membrane. With respect to regulation, alternates between an inactive form bound to GDP and an active form bound to GTP. Activated by guanine nucleotide-exchange factors (GEFs), and inactivated by GTPase-activating proteins (GAPs). Ypt/Rab-type GTPases are key regulators of membrane trafficking and intracellular vesicular transport. They act as molecular switches that convert between GTP-bound and GDP-bound states, and regulate virtually all steps of membrane traffic from the formation of the transport vesicle at the donor membrane to its fusion at the target membrane. In the GDP-bound state, Ypt proteins are predominantly cytosolic, solubilized through the interaction with a GDP dissociation inhibitor (GDI). In the GTP-bound state, the proteins are membrane bound and interact with specific effector proteins that select cargo, promote vesicle movement, or verify the correct site of fusion. The polypeptide is Ypt/Rab-type GTPase Rab7 (gtp-14) (Neurospora crassa (strain ATCC 24698 / 74-OR23-1A / CBS 708.71 / DSM 1257 / FGSC 987)).